Here is a 344-residue protein sequence, read N- to C-terminus: Heat-inducible transcription repressor HrcA (344 aa).

The protein belongs to the HrcA family.

In terms of biological role, negative regulator of class I heat shock genes (grpE-dnaK-dnaJ and groELS operons). Prevents heat-shock induction of these operons. The sequence is that of Heat-inducible transcription repressor HrcA from Aster yellows witches'-broom phytoplasma (strain AYWB).